The sequence spans 200 residues: Probable UbiX-like flavin prenyltransferase (200 aa).

FMN contacts are provided by residues 9-11, serine 36, 87-90, and arginine 122; these read GAT and SMKT.

It belongs to the UbiX/PAD1 family. YclB subfamily. In terms of assembly, homododecamer.

It catalyses the reaction dimethylallyl phosphate + FMNH2 = prenylated FMNH2 + phosphate. Its function is as follows. Involved in the non-oxidative decarboxylation and detoxification of phenolic derivatives under both aerobic and anaerobic conditions. Flavin prenyltransferase that catalyzes the synthesis of the prenylated FMN cofactor (prenyl-FMN) for phenolic acid decarboxylase. In Streptomyces sp. (strain D7), this protein is Probable UbiX-like flavin prenyltransferase.